Reading from the N-terminus, the 409-residue chain is Glucose-1-phosphate adenylyltransferase (409 aa).

Alpha-D-glucose 1-phosphate is bound by residues G168, 183–184 (EK), and S201.

It belongs to the bacterial/plant glucose-1-phosphate adenylyltransferase family. In terms of assembly, homotetramer.

It carries out the reaction alpha-D-glucose 1-phosphate + ATP + H(+) = ADP-alpha-D-glucose + diphosphate. Its pathway is glycan biosynthesis; glycogen biosynthesis. Involved in the biosynthesis of ADP-glucose, a building block required for the elongation reactions to produce glycogen. Catalyzes the reaction between ATP and alpha-D-glucose 1-phosphate (G1P) to produce pyrophosphate and ADP-Glc. In Corynebacterium glutamicum (strain R), this protein is Glucose-1-phosphate adenylyltransferase.